The sequence spans 118 residues: Large ribosomal subunit protein uL24 (118 aa).

Belongs to the universal ribosomal protein uL24 family. In terms of assembly, part of the 50S ribosomal subunit.

In terms of biological role, one of two assembly initiator proteins, it binds directly to the 5'-end of the 23S rRNA, where it nucleates assembly of the 50S subunit. Its function is as follows. One of the proteins that surrounds the polypeptide exit tunnel on the outside of the subunit. This chain is Large ribosomal subunit protein uL24, found in Prochlorococcus marinus (strain NATL1A).